The primary structure comprises 645 residues: Threonine--tRNA ligase (645 aa).

One can recognise a TGS domain in the interval 1–61 (MPAITLPDGS…SSDASVKFIT (61 aa)). The catalytic stretch occupies residues 243–536 (DHRRIGREMD…LIEQYAGKFP (294 aa)). The Zn(2+) site is built by cysteine 336, histidine 387, and histidine 513.

The protein belongs to the class-II aminoacyl-tRNA synthetase family. Homodimer. It depends on Zn(2+) as a cofactor.

The protein localises to the cytoplasm. The enzyme catalyses tRNA(Thr) + L-threonine + ATP = L-threonyl-tRNA(Thr) + AMP + diphosphate + H(+). Catalyzes the attachment of threonine to tRNA(Thr) in a two-step reaction: L-threonine is first activated by ATP to form Thr-AMP and then transferred to the acceptor end of tRNA(Thr). Also edits incorrectly charged L-seryl-tRNA(Thr). The protein is Threonine--tRNA ligase of Gluconobacter oxydans (strain 621H) (Gluconobacter suboxydans).